We begin with the raw amino-acid sequence, 569 residues long: Proline--tRNA ligase (569 aa).

This sequence belongs to the class-II aminoacyl-tRNA synthetase family. ProS type 1 subfamily. Homodimer.

It localises to the cytoplasm. The enzyme catalyses tRNA(Pro) + L-proline + ATP = L-prolyl-tRNA(Pro) + AMP + diphosphate. Catalyzes the attachment of proline to tRNA(Pro) in a two-step reaction: proline is first activated by ATP to form Pro-AMP and then transferred to the acceptor end of tRNA(Pro). As ProRS can inadvertently accommodate and process non-cognate amino acids such as alanine and cysteine, to avoid such errors it has two additional distinct editing activities against alanine. One activity is designated as 'pretransfer' editing and involves the tRNA(Pro)-independent hydrolysis of activated Ala-AMP. The other activity is designated 'posttransfer' editing and involves deacylation of mischarged Ala-tRNA(Pro). The misacylated Cys-tRNA(Pro) is not edited by ProRS. The sequence is that of Proline--tRNA ligase from Legionella pneumophila subsp. pneumophila (strain Philadelphia 1 / ATCC 33152 / DSM 7513).